Consider the following 90-residue polypeptide: Conotoxin Ca8.2 (90 aa).

The first 21 residues, 1–21, serve as a signal peptide directing secretion; it reads MMLKMGAMFVLLLLFILPSSQ. The propeptide occupies 22 to 46; that stretch reads QEGDVQARKTHLKRGFYGTLAMSTR. Glutamine amide is present on Gln-89.

Belongs to the conotoxin S superfamily. Contains 5 disulfide bonds. Expressed by the venom duct.

It localises to the secreted. This is Conotoxin Ca8.2 from Conus caracteristicus (Characteristic cone).